The sequence spans 298 residues: Mitochondrial glycine transporter (298 aa).

3 Solcar repeats span residues 5-84 (TKTR…MRTA), 105-189 (LTTY…AKEV), and 211-295 (TSTL…LIKL). 6 helical membrane passes run 11 to 36 (LIGG…TRIQ), 59 to 85 (GTLP…RTAI), 111 to 136 (LISG…VRYE), 164 to 187 (GFGP…EKAK), 215 to 241 (VNST…KTRM), and 270 to 288 (GLSM…AWGI).

Belongs to the mitochondrial carrier (TC 2.A.29) family. SLC25A38 subfamily.

The protein localises to the mitochondrion inner membrane. The catalysed reaction is glycine(in) = glycine(out). Its function is as follows. Mitochondrial glycine transporter that imports glycine into the mitochondrial matrix. Plays an important role in providing glycine for the first enzymatic step in heme biosynthesis, the condensation of glycine with succinyl-CoA to produce 5-aminolevulinate (ALA) in the mitochondrial matrix. The sequence is that of Mitochondrial glycine transporter from Vanderwaltozyma polyspora (strain ATCC 22028 / DSM 70294 / BCRC 21397 / CBS 2163 / NBRC 10782 / NRRL Y-8283 / UCD 57-17) (Kluyveromyces polysporus).